A 452-amino-acid chain; its full sequence is Eukaryotic translation initiation factor 3 subunit E (452 aa).

Residues threonine 257–glutamine 426 enclose the PCI domain.

The protein belongs to the eIF-3 subunit E family. In terms of assembly, component of the eukaryotic translation initiation factor 3 (eIF-3) complex.

Its subcellular location is the cytoplasm. Functionally, component of the eukaryotic translation initiation factor 3 (eIF-3) complex, which is involved in protein synthesis of a specialized repertoire of mRNAs and, together with other initiation factors, stimulates binding of mRNA and methionyl-tRNAi to the 40S ribosome. The eIF-3 complex specifically targets and initiates translation of a subset of mRNAs involved in cell proliferation. In Aspergillus niger (strain ATCC MYA-4892 / CBS 513.88 / FGSC A1513), this protein is Eukaryotic translation initiation factor 3 subunit E (int6).